The primary structure comprises 767 residues: Probable beta-glucosidase K (767 aa).

Asn-19 carries an N-linked (GlcNAc...) asparagine glycan. Asp-232 is an active-site residue. 3 N-linked (GlcNAc...) asparagine glycosylation sites follow: Asn-324, Asn-477, and Asn-749. In terms of domain architecture, PA14 spans Glu-405–Val-552. The tract at residues Leu-727–Arg-767 is disordered. Positions Arg-743–Gln-757 are enriched in polar residues.

Belongs to the glycosyl hydrolase 3 family.

The protein resides in the secreted. The catalysed reaction is Hydrolysis of terminal, non-reducing beta-D-glucosyl residues with release of beta-D-glucose.. The protein operates within glycan metabolism; cellulose degradation. Beta-glucosidases are one of a number of cellulolytic enzymes involved in the degradation of cellulosic biomass. Catalyzes the last step releasing glucose from the inhibitory cellobiose. This Aspergillus fumigatus (strain ATCC MYA-4609 / CBS 101355 / FGSC A1100 / Af293) (Neosartorya fumigata) protein is Probable beta-glucosidase K (bglK).